The primary structure comprises 421 residues: Calreticulin (421 aa).

Residues 1–22 (MAFRVPNSSLLSLILLSLLAIA) form the signal peptide. An N-linked (GlcNAc...) asparagine glycan is attached at Asn-56. Residues Cys-110 and Cys-142 are joined by a disulfide bond. Positions 114, 116, 133, and 140 each coordinate an alpha-D-glucoside. Asn-156 carries an N-linked (GlcNAc...) asparagine glycan. 7 repeat units span residues 196–207 (KQTGSLYSDWDL), 215–226 (DPEAKKPEDWED), 232–243 (DPEDKKPEGYDD), 250–261 (DPDAKKPEDWDD), 265–275 (GEWTAPTIPNP), 279–289 (GEWKPKKIKNP), and 293–303 (GKWKAPLIDNP). The segment at 196–261 (KQTGSLYSDW…DAKKPEDWDD (66 aa)) is 4 X approximate repeats. The segment at 217-283 (EAKKPEDWED…NPEYKGEWKP (67 aa)) is disordered. The segment covering 223–232 (DWEDQEYIPD) has biased composition (acidic residues). The segment covering 233–257 (PEDKKPEGYDDIPKEITDPDAKKPE) has biased composition (basic and acidic residues). Residues 265-303 (GEWTAPTIPNPEYKGEWKPKKIKNPNFKGKWKAPLIDNP) form a 3 X approximate repeats region. Glu-323 provides a ligand contact to an alpha-D-glucoside. The span at 350 to 380 (EETWGKQKDAEKAAFEELEKKLQEEESKEDP) shows a compositional bias: basic and acidic residues. The tract at residues 350-421 (EETWGKQKDA…ETEAEKHDEL (72 aa)) is disordered. The segment covering 381–399 (VDSDAEDDDNEAEDGEESD) has biased composition (acidic residues). Positions 418–421 (HDEL) match the Prevents secretion from ER motif.

Belongs to the calreticulin family.

The protein localises to the endoplasmic reticulum lumen. In terms of biological role, molecular calcium-binding chaperone promoting folding, oligomeric assembly and quality control in the ER via the calreticulin/calnexin cycle. This lectin may interact transiently with almost all of the monoglucosylated glycoproteins that are synthesized in the ER. This is Calreticulin from Prunus armeniaca (Apricot).